A 570-amino-acid chain; its full sequence is GDP-Man:Man(3)GlcNAc(2)-PP-Dol alpha-1,2-mannosyltransferase (570 aa).

The Lumenal segment spans residues 1 to 7; it reads MKLADFV. The chain crosses the membrane as a helical span at residues 8 to 70; that stretch reads TYVFGSLLAG…DFGWKNSSVR (63 aa). At 71–200 the chain is on the cytoplasmic side; that stretch reads RAFILASERP…RLVESKSWPK (130 aa). An intramembrane region (helical) is located at residues 201 to 221; it reads FTLLGQAYGSIILSIEALTTL. At 222–446 the chain is on the cytoplasmic side; that stretch reads APDYWIDTMG…FGINAMWNEH (225 aa). An intramembrane region (helical) is located at residues 447–467; sequence FGIAVVEYMASGLIPLCHASA. The Cytoplasmic segment spans residues 468–570; that stretch reads GPLYDIVVPW…LNLTHNRMFS (103 aa).

Belongs to the glycosyltransferase group 1 family.

The protein localises to the endoplasmic reticulum membrane. It catalyses the reaction an alpha-D-Man-(1-&gt;3)-[alpha-D-Man-(1-&gt;6)]-beta-D-Man-(1-&gt;4)-beta-D-GlcNAc-(1-&gt;4)-alpha-D-GlcNAc-diphospho-di-trans,poly-cis-dolichol + 2 GDP-alpha-D-mannose = an alpha-D-Man-(1-&gt;2)-alpha-D-Man-(1-&gt;2)-alpha-D-Man-(1-&gt;3)-[alpha-D-Man-(1-&gt;6)]-beta-D-Man-(1-&gt;4)-beta-D-GlcNAc-(1-&gt;4)-alpha-D-GlcNAc-diphospho-di-trans,poly-cis-dolichol + 2 GDP + 2 H(+). It functions in the pathway protein modification; protein glycosylation. Functionally, GDP-Man:Man(3)GlcNAc(2)-PP-Dol alpha-1,2-mannosyltransferase that operates in the biosynthetic pathway of dolichol-linked oligosaccharides, the glycan precursors employed in protein asparagine (N)-glycosylation. The assembly of dolichol-linked oligosaccharides begins on the cytosolic side of the endoplasmic reticulum membrane and finishes in its lumen. The sequential addition of sugars to dolichol pyrophosphate produces dolichol-linked oligosaccharides containing fourteen sugars, including two GlcNAcs, nine mannoses and three glucoses. Once assembled, the oligosaccharide is transferred from the lipid to nascent proteins by oligosaccharyltransferases. Catalyzes, on the cytoplasmic face of the endoplasmic reticulum, the addition of the fourth and fifth mannose residues to the dolichol-linked oligosaccharide chain, to produce Man(5)GlcNAc(2)-PP-dolichol core oligosaccharide. This Kluyveromyces lactis (strain ATCC 8585 / CBS 2359 / DSM 70799 / NBRC 1267 / NRRL Y-1140 / WM37) (Yeast) protein is GDP-Man:Man(3)GlcNAc(2)-PP-Dol alpha-1,2-mannosyltransferase (ALG11).